We begin with the raw amino-acid sequence, 318 residues long: Pheromone-regulated membrane protein 5 (318 aa).

A helical membrane pass occupies residues 75–98 (GTVFIVVGGIAGVIFLAILLWWVI). Phosphoserine is present on Ser129. Residues 238-247 (TISSSSASSL) show a composition bias toward low complexity. The disordered stretch occupies residues 238–318 (TISSSSASSL…HMLEGKEQDE (81 aa)). Over residues 250 to 261 (GNEKEVGEDIRK) the composition is skewed to basic and acidic residues. Positions 276 to 285 (SPESDGSVNR) are enriched in polar residues. A phosphoserine mark is found at Ser279, Ser282, and Ser288. Over residues 309-318 (HMLEGKEQDE) the composition is skewed to basic and acidic residues. A Glycyl lysine isopeptide (Lys-Gly) (interchain with G-Cter in ubiquitin) cross-link involves residue Lys314.

This sequence belongs to the PRM5 family.

It is found in the membrane. This Saccharomyces cerevisiae (strain ATCC 204508 / S288c) (Baker's yeast) protein is Pheromone-regulated membrane protein 5 (PRM5).